A 450-amino-acid polypeptide reads, in one-letter code: MTSAQLDFSRIDLRGQAPTTAELRHRLPRGGTDVDSVIPTVAPIVDQVREGGARAALEIGQRFDGVTPDSVRVPAEVIDAAVGTLADDVIAALEEAIKRVRAFHSAIRPEDKQVEVAPGGIVTERFIPVQRVGLYAPGGNAVYPSSVIMNVVPAQEAGVESLVVASPPQEGGWPHPTVLAACKLLGVDEVWAVGGAQAVALLAHGSTAEGGEELEPVDMVTGPGNIFVTAAKRLCRSVVGIDSEAGPTEIAVLADESANAVEIAYDLISQAEHDTMAASVLITDSEKLADEVVAEMNERYHITENSERVAEALSGQQSGVVLVDDIAAGIRAANAYGAEHLEIHTEDAHGVAAQITNAGAIFIGRFSPVPLGDYAAGSNHVLPTSGTARHSSGLSTLTFLKSVHVIDYNEEGLRGVADTVITLSKSEGLPAHGEAISARTSTANTNGTEV.

NAD(+) is bound by residues Y135, Q197, and N225. Residues T248, Q270, and H273 each contribute to the substrate site. Zn(2+) is bound by residues Q270 and H273. Catalysis depends on proton acceptor residues E339 and H340. Residues H340, D373, E427, and H432 each contribute to the substrate site. D373 is a Zn(2+) binding site. H432 contacts Zn(2+).

It belongs to the histidinol dehydrogenase family. Zn(2+) is required as a cofactor.

The catalysed reaction is L-histidinol + 2 NAD(+) + H2O = L-histidine + 2 NADH + 3 H(+). The protein operates within amino-acid biosynthesis; L-histidine biosynthesis; L-histidine from 5-phospho-alpha-D-ribose 1-diphosphate: step 9/9. Its function is as follows. Catalyzes the sequential NAD-dependent oxidations of L-histidinol to L-histidinaldehyde and then to L-histidine. The chain is Histidinol dehydrogenase from Corynebacterium jeikeium (strain K411).